The sequence spans 168 residues: Phosphopantetheine adenylyltransferase (168 aa).

Substrate is bound at residue Ser-8. ATP is bound by residues Ser-8–Phe-9 and His-16. The substrate site is built by Lys-40, Thr-72, and Arg-86. Residues Gly-87 to Arg-89, Glu-97, and Tyr-122 to Ser-128 each bind ATP.

It belongs to the bacterial CoaD family. In terms of assembly, homohexamer. It depends on Mg(2+) as a cofactor.

The protein localises to the cytoplasm. It catalyses the reaction (R)-4'-phosphopantetheine + ATP + H(+) = 3'-dephospho-CoA + diphosphate. The protein operates within cofactor biosynthesis; coenzyme A biosynthesis; CoA from (R)-pantothenate: step 4/5. Reversibly transfers an adenylyl group from ATP to 4'-phosphopantetheine, yielding dephospho-CoA (dPCoA) and pyrophosphate. The sequence is that of Phosphopantetheine adenylyltransferase from Thermosynechococcus vestitus (strain NIES-2133 / IAM M-273 / BP-1).